We begin with the raw amino-acid sequence, 256 residues long: DNA repair protein RecO (256 aa).

This sequence belongs to the RecO family.

Functionally, involved in DNA repair and RecF pathway recombination. The polypeptide is DNA repair protein RecO (Delftia acidovorans (strain DSM 14801 / SPH-1)).